We begin with the raw amino-acid sequence, 488 residues long: Probable glycine dehydrogenase (decarboxylating) subunit 2 (488 aa).

N6-(pyridoxal phosphate)lysine is present on lysine 274.

It belongs to the GcvP family. C-terminal subunit subfamily. As to quaternary structure, the glycine cleavage system is composed of four proteins: P, T, L and H. In this organism, the P 'protein' is a heterodimer of two subunits. The cofactor is pyridoxal 5'-phosphate.

The catalysed reaction is N(6)-[(R)-lipoyl]-L-lysyl-[glycine-cleavage complex H protein] + glycine + H(+) = N(6)-[(R)-S(8)-aminomethyldihydrolipoyl]-L-lysyl-[glycine-cleavage complex H protein] + CO2. Functionally, the glycine cleavage system catalyzes the degradation of glycine. The P protein binds the alpha-amino group of glycine through its pyridoxal phosphate cofactor; CO(2) is released and the remaining methylamine moiety is then transferred to the lipoamide cofactor of the H protein. The protein is Probable glycine dehydrogenase (decarboxylating) subunit 2 of Listeria innocua serovar 6a (strain ATCC BAA-680 / CLIP 11262).